The sequence spans 126 residues: Protein ApaG (126 aa).

An ApaG domain is found at 2 to 126; sequence SFPIDSIKIK…FRLAMPGVMQ (125 aa).

This Shewanella denitrificans (strain OS217 / ATCC BAA-1090 / DSM 15013) protein is Protein ApaG.